Here is an 89-residue protein sequence, read N- to C-terminus: MRKKSSSNKEETALHPPPENFETATAELEQIVAGMETGQMSLEDALSAYKRGVELLQYCQNILKNSQQQIKILEADMLKHFSPAEHDAS.

The interval 1–22 (MRKKSSSNKEETALHPPPENFE) is disordered.

This sequence belongs to the XseB family. In terms of assembly, heterooligomer composed of large and small subunits.

It is found in the cytoplasm. The catalysed reaction is Exonucleolytic cleavage in either 5'- to 3'- or 3'- to 5'-direction to yield nucleoside 5'-phosphates.. In terms of biological role, bidirectionally degrades single-stranded DNA into large acid-insoluble oligonucleotides, which are then degraded further into small acid-soluble oligonucleotides. The sequence is that of Exodeoxyribonuclease 7 small subunit from Nitrosomonas europaea (strain ATCC 19718 / CIP 103999 / KCTC 2705 / NBRC 14298).